An 83-amino-acid polypeptide reads, in one-letter code: Kappa-actitoxin-Aer3a (83 aa).

An N-terminal signal peptide occupies residues 1 to 22 (MKGQMIICLVLIALCMSVVVMA). A propeptide spanning residues 23-49 (QNLRAEELEKANPKDERVRSFERNQKR) is cleaved from the precursor. In terms of domain architecture, ShKT spans 51 to 83 (CKDYLPKSECTQFRCRTSMKYKYTNCKKTCGTC). 3 disulfide bridges follow: Cys-51/Cys-83, Cys-60/Cys-76, and Cys-65/Cys-80.

This sequence belongs to the sea anemone type 1 potassium channel toxin family. Type 1a subfamily.

It is found in the secreted. The protein resides in the nematocyst. In terms of biological role, specifically, dose-dependently and potently blocks the voltage-gated potassium channel Kv1.1/KCNA1 (Ki=1.6 pM). Moderately blocks potassium channel heterotetramers formed by 3 subunits of Kv1.1/KCNA1 and 1 subunit of Kv1.2/KCNA2 (Ki=56 nM) and weakly blocks those formed by 2 subunits of Kv1.1/KCNA1 and 2 subunits of Kv1.2/KCNA2 (Ki=14 nM). This is Kappa-actitoxin-Aer3a from Anemonia erythraea (Sea anemone).